The chain runs to 244 residues: uncharacterized protein (244 aa).

The first 17 residues, Met-1 to Gly-17, serve as a signal peptide directing secretion.

As to expression, component of the acid-soluble and acid-insoluble organic matrix of prismatic shell layers (at protein level).

It is found in the secreted. This is an uncharacterized protein from Haliotis asinina (Donkey's ear abalone).